The chain runs to 208 residues: dITP/XTP pyrophosphatase (208 aa).

16-21 provides a ligand contact to substrate; that stretch reads SNNKGK. Aspartate 79 serves as the catalytic Proton acceptor. Position 79 (aspartate 79) interacts with Mg(2+). Substrate-binding positions include serine 80, 166-169, lysine 189, and 194-195; these read FGYD and HR.

The protein belongs to the HAM1 NTPase family. In terms of assembly, homodimer. Mg(2+) is required as a cofactor.

The catalysed reaction is XTP + H2O = XMP + diphosphate + H(+). The enzyme catalyses dITP + H2O = dIMP + diphosphate + H(+). It carries out the reaction ITP + H2O = IMP + diphosphate + H(+). Its function is as follows. Pyrophosphatase that catalyzes the hydrolysis of nucleoside triphosphates to their monophosphate derivatives, with a high preference for the non-canonical purine nucleotides XTP (xanthosine triphosphate), dITP (deoxyinosine triphosphate) and ITP. Seems to function as a house-cleaning enzyme that removes non-canonical purine nucleotides from the nucleotide pool, thus preventing their incorporation into DNA/RNA and avoiding chromosomal lesions. The polypeptide is dITP/XTP pyrophosphatase (Acinetobacter baumannii (strain ACICU)).